A 220-amino-acid polypeptide reads, in one-letter code: 7-cyano-7-deazaguanine synthase (220 aa).

11–21 (VSGGMDSVTLM) contacts ATP. Residues Cys-186, Cys-194, Cys-197, and Cys-200 each coordinate Zn(2+).

The protein belongs to the QueC family. Zn(2+) serves as cofactor.

It carries out the reaction 7-carboxy-7-deazaguanine + NH4(+) + ATP = 7-cyano-7-deazaguanine + ADP + phosphate + H2O + H(+). It functions in the pathway purine metabolism; 7-cyano-7-deazaguanine biosynthesis. Catalyzes the ATP-dependent conversion of 7-carboxy-7-deazaguanine (CDG) to 7-cyano-7-deazaguanine (preQ(0)). The polypeptide is 7-cyano-7-deazaguanine synthase (Porphyromonas gingivalis (strain ATCC BAA-308 / W83)).